A 187-amino-acid chain; its full sequence is RNA pyrophosphohydrolase (187 aa).

One can recognise a Nudix hydrolase domain in the interval 6–149; that stretch reads GYRANVGIIL…KRQVYRQALT (144 aa). A Nudix box motif is present at residues 38 to 59; the sequence is GGIKSGETPTEAMYRELAEETG. The tract at residues 166–187 is disordered; that stretch reads AYREPLEPVEKNRKKSSDTRQS.

This sequence belongs to the Nudix hydrolase family. RppH subfamily. The cofactor is a divalent metal cation.

Accelerates the degradation of transcripts by removing pyrophosphate from the 5'-end of triphosphorylated RNA, leading to a more labile monophosphorylated state that can stimulate subsequent ribonuclease cleavage. This is RNA pyrophosphohydrolase from Nitrosomonas europaea (strain ATCC 19718 / CIP 103999 / KCTC 2705 / NBRC 14298).